The following is a 232-amino-acid chain: Thiamine import ATP-binding protein ThiQ (232 aa).

One can recognise an ABC transporter domain in the interval 2-230 (LKLTDITWLY…KASASALLGI (229 aa)). Residue 32–39 (GPSGAGKS) participates in ATP binding.

Belongs to the ABC transporter superfamily. Thiamine importer (TC 3.A.1.19.1) family. In terms of assembly, the complex is composed of two ATP-binding proteins (ThiQ), two transmembrane proteins (ThiP) and a solute-binding protein (ThiB).

The protein resides in the cell inner membrane. It catalyses the reaction thiamine(out) + ATP + H2O = thiamine(in) + ADP + phosphate + H(+). Functionally, part of the ABC transporter complex ThiBPQ involved in thiamine import. Responsible for energy coupling to the transport system. This is Thiamine import ATP-binding protein ThiQ from Escherichia coli O6:K15:H31 (strain 536 / UPEC).